The following is a 112-amino-acid chain: Ferredoxin, plant-type (112 aa).

Residues 6–97 (YEVFEVLSGQ…DLTIEYFRHV (92 aa)) enclose the 2Fe-2S ferredoxin-type domain. C41, C46, C49, and C81 together coordinate [2Fe-2S] cluster.

Belongs to the 2Fe2S plant-type ferredoxin family.

It participates in aromatic compound metabolism; catechol degradation. Ferredoxins are iron-sulfur proteins that transfer electrons in a wide variety of metabolic reactions. This is Ferredoxin, plant-type (xylT) from Pseudomonas putida (Arthrobacter siderocapsulatus).